A 437-amino-acid polypeptide reads, in one-letter code: Serine--tRNA ligase (437 aa).

240-242 provides a ligand contact to L-serine; that stretch reads TAE. 271–273 provides a ligand contact to ATP; the sequence is RAE. Glu-294 contributes to the L-serine binding site. 358–361 is a binding site for ATP; the sequence is EISS. Position 394 (Ser-394) interacts with L-serine.

It belongs to the class-II aminoacyl-tRNA synthetase family. Type-1 seryl-tRNA synthetase subfamily. As to quaternary structure, homodimer. The tRNA molecule binds across the dimer.

The protein localises to the cytoplasm. It carries out the reaction tRNA(Ser) + L-serine + ATP = L-seryl-tRNA(Ser) + AMP + diphosphate + H(+). The catalysed reaction is tRNA(Sec) + L-serine + ATP = L-seryl-tRNA(Sec) + AMP + diphosphate + H(+). Its pathway is aminoacyl-tRNA biosynthesis; selenocysteinyl-tRNA(Sec) biosynthesis; L-seryl-tRNA(Sec) from L-serine and tRNA(Sec): step 1/1. Its function is as follows. Catalyzes the attachment of serine to tRNA(Ser). Is also able to aminoacylate tRNA(Sec) with serine, to form the misacylated tRNA L-seryl-tRNA(Sec), which will be further converted into selenocysteinyl-tRNA(Sec). The sequence is that of Serine--tRNA ligase from Methylobacterium nodulans (strain LMG 21967 / CNCM I-2342 / ORS 2060).